A 380-amino-acid chain; its full sequence is Erythronate-4-phosphate dehydrogenase (380 aa).

Substrate is bound by residues Ser45 and Thr66. Asp146 is a binding site for NAD(+). Residue Arg207 is part of the active site. Asp232 is a binding site for NAD(+). The active site involves Glu237. His254 (proton donor) is an active-site residue. An NAD(+)-binding site is contributed by Gly257. Tyr258 contributes to the substrate binding site.

This sequence belongs to the D-isomer specific 2-hydroxyacid dehydrogenase family. PdxB subfamily. As to quaternary structure, homodimer.

The protein localises to the cytoplasm. It carries out the reaction 4-phospho-D-erythronate + NAD(+) = (R)-3-hydroxy-2-oxo-4-phosphooxybutanoate + NADH + H(+). It participates in cofactor biosynthesis; pyridoxine 5'-phosphate biosynthesis; pyridoxine 5'-phosphate from D-erythrose 4-phosphate: step 2/5. Functionally, catalyzes the oxidation of erythronate-4-phosphate to 3-hydroxy-2-oxo-4-phosphonooxybutanoate. This chain is Erythronate-4-phosphate dehydrogenase, found in Marinomonas sp. (strain MWYL1).